A 1178-amino-acid polypeptide reads, in one-letter code: Phosphate system positive regulatory protein PHO81 (1178 aa).

The 169-residue stretch at 1–169 folds into the SPX domain; it reads MKFGKYLEAR…QSHDKDFYLA (169 aa). Residues 210-250 are disordered; the sequence is QSSTFTNDDDDDNNTSNNNKHNNNNNNNNNNNNNNNNNNIL. Residues 223–250 are compositionally biased toward low complexity; the sequence is NTSNNNKHNNNNNNNNNNNNNNNNNNIL. 6 ANK repeats span residues 423 to 452, 458 to 487, 506 to 535, 556 to 586, 591 to 620, and 624 to 653; these read HSRVPLHYAAELGKLEFVHSLLITNLLEDV, DSKTPLVLAITNNHIDVVRDLLTIGGANAS, VQFDPLNVACKFNNHDAAKLLLEIRSKQNA, TGLCTLHIVAKIGGDPQLIQLLIRYGADPNE, NKWTPIFYAVRSGHSEVITELLKHNARLDI, and NGHSPLFYALWESHVDVLNALLQRPLNLPS. The region spanning 871–1178 is the GP-PDE domain; it reads IINYEPYWKS…ELLFENNIDM (308 aa). Residue Ser-956 is modified to Phosphoserine.

As to quaternary structure, associates specifically with the PHO80-PHO85 and PCL7-PHO85 cyclin-CDK complexes, and much of this interaction is mediated through the PHO80 and PCL7 cyclin subunits. Interacts with the transcription factor PHO4. Post-translationally, phosphorylated by the cyclin-CDK PHO80-PHO85. Phosphorylation mediates the formation of a stable interaction with the cyclin-CDK and is required for function as an active inhibitor of the complex under phosphate starvation conditions.

Its subcellular location is the cytoplasm. It localises to the nucleus. Inhibits the kinase activity of the cyclin-CDKs PHO80-PHO85 and PCL7-PHO85 under low-phosphate conditions. The sequence is that of Phosphate system positive regulatory protein PHO81 (PHO81) from Saccharomyces cerevisiae (strain ATCC 204508 / S288c) (Baker's yeast).